The chain runs to 229 residues: Large ribosomal subunit protein bL25 (229 aa).

Disordered stretches follow at residues 1–21 and 187–229; these read MSDA…GASR and PSAL…KGDD. Residues 196-207 are compositionally biased toward acidic residues; the sequence is SEEEEDGEEVDA.

It belongs to the bacterial ribosomal protein bL25 family. CTC subfamily. Part of the 50S ribosomal subunit; part of the 5S rRNA/L5/L18/L25 subcomplex. Contacts the 5S rRNA. Binds to the 5S rRNA independently of L5 and L18.

Its function is as follows. This is one of the proteins that binds to the 5S RNA in the ribosome where it forms part of the central protuberance. The polypeptide is Large ribosomal subunit protein bL25 (Erythrobacter litoralis (strain HTCC2594)).